The sequence spans 68 residues: MPDEMIEVPCPICQKSVPWINESTFRPFCSKRCQLIDLGEWAAEEKAIPSDTADFAMDPNMSDGWSIK.

Zn(2+) is bound by residues Cys-10, Cys-13, Cys-29, and Cys-33.

Belongs to the DNA gyrase inhibitor YacG family. As to quaternary structure, interacts with GyrB. Zn(2+) serves as cofactor.

Its function is as follows. Inhibits all the catalytic activities of DNA gyrase by preventing its interaction with DNA. Acts by binding directly to the C-terminal domain of GyrB, which probably disrupts DNA binding by the gyrase. This chain is DNA gyrase inhibitor YacG, found in Haemophilus influenzae (strain PittGG).